A 499-amino-acid polypeptide reads, in one-letter code: Ribose import ATP-binding protein RbsA 1 (499 aa).

ABC transporter domains are found at residues 5–240 (LEMR…GRSI) and 249–494 (TEPG…TAGS). Position 37–44 (37–44 (GENGAGKS)) interacts with ATP.

The protein belongs to the ABC transporter superfamily. Ribose importer (TC 3.A.1.2.1) family. In terms of assembly, the complex is composed of an ATP-binding protein (RbsA), two transmembrane proteins (RbsC) and a solute-binding protein (RbsB).

Its subcellular location is the cell membrane. The enzyme catalyses D-ribose(out) + ATP + H2O = D-ribose(in) + ADP + phosphate + H(+). Part of the ABC transporter complex RbsABC involved in ribose import. Responsible for energy coupling to the transport system. The protein is Ribose import ATP-binding protein RbsA 1 of Rubrobacter xylanophilus (strain DSM 9941 / JCM 11954 / NBRC 16129 / PRD-1).